A 149-amino-acid chain; its full sequence is Arginine repressor (149 aa).

Belongs to the ArgR family.

It localises to the cytoplasm. It participates in amino-acid biosynthesis; L-arginine biosynthesis [regulation]. Regulates arginine biosynthesis genes. This chain is Arginine repressor, found in Shouchella clausii (strain KSM-K16) (Alkalihalobacillus clausii).